Reading from the N-terminus, the 156-residue chain is Putative NrdI-like protein (156 aa).

It belongs to the NrdI family.

The polypeptide is Putative NrdI-like protein (Streptococcus pneumoniae serotype 4 (strain ATCC BAA-334 / TIGR4)).